The sequence spans 419 residues: UDP-N-acetylglucosamine 1-carboxyvinyltransferase (419 aa).

22 to 23 lines the phosphoenolpyruvate pocket; that stretch reads KN. R91 serves as a coordination point for UDP-N-acetyl-alpha-D-glucosamine. Catalysis depends on C115, which acts as the Proton donor. At C115 the chain carries 2-(S-cysteinyl)pyruvic acid O-phosphothioketal. UDP-N-acetyl-alpha-D-glucosamine contacts are provided by residues 120 to 124, 160 to 163, D305, and I327; these read RPVDL and KVSV.

This sequence belongs to the EPSP synthase family. MurA subfamily.

It is found in the cytoplasm. It catalyses the reaction phosphoenolpyruvate + UDP-N-acetyl-alpha-D-glucosamine = UDP-N-acetyl-3-O-(1-carboxyvinyl)-alpha-D-glucosamine + phosphate. Its pathway is cell wall biogenesis; peptidoglycan biosynthesis. Cell wall formation. Adds enolpyruvyl to UDP-N-acetylglucosamine. The chain is UDP-N-acetylglucosamine 1-carboxyvinyltransferase from Sodalis glossinidius (strain morsitans).